Consider the following 458-residue polypeptide: Serine--tRNA ligase (458 aa).

252–254 (TAE) contacts L-serine. Residues 283–285 (RKE) and V299 each bind ATP. E306 is a binding site for L-serine. 370 to 373 (EMVS) provides a ligand contact to ATP. T405 contacts L-serine.

The protein belongs to the class-II aminoacyl-tRNA synthetase family. Type-1 seryl-tRNA synthetase subfamily. In terms of assembly, homodimer. The tRNA molecule binds across the dimer.

Its subcellular location is the cytoplasm. The catalysed reaction is tRNA(Ser) + L-serine + ATP = L-seryl-tRNA(Ser) + AMP + diphosphate + H(+). It catalyses the reaction tRNA(Sec) + L-serine + ATP = L-seryl-tRNA(Sec) + AMP + diphosphate + H(+). It participates in aminoacyl-tRNA biosynthesis; selenocysteinyl-tRNA(Sec) biosynthesis; L-seryl-tRNA(Sec) from L-serine and tRNA(Sec): step 1/1. In terms of biological role, catalyzes the attachment of serine to tRNA(Ser). Is also able to aminoacylate tRNA(Sec) with serine, to form the misacylated tRNA L-seryl-tRNA(Sec), which will be further converted into selenocysteinyl-tRNA(Sec). The chain is Serine--tRNA ligase from Sulfolobus acidocaldarius (strain ATCC 33909 / DSM 639 / JCM 8929 / NBRC 15157 / NCIMB 11770).